The sequence spans 566 residues: MDVENLIITTLKDKVKGLTGNEMDIRLDEPPAINMGDYSTNISFRLAKDLKKAPKMIAEDIANSLSILGIERIEAVNGYINFFMNYSDFSKETVSKISDEKENFGKLEKRNEKVILEHTSANPNGPFHIGHGRNMVIGDSLKRILIASGYDVETQYYVNDMGRQEAIVVFGNEKFELDNSKKADHAIGEVYVETNKLLAENEELEQEILNLMKNYESACEAGIENELTEKFKNAVNYSLGGFKETLLTLNIYHDKFVWESEFVKSGMVREVINRLMNTGKVVEDEVYRLDLSDYGIEKKLVLARLNGTSLYSTRDIAYHITKMENCDFAVNLLGADHKLTAVMVNKTLALLGYNEAEVVFYEFISLPEGSMSTRKGRFISMDELFEEAKSRAAEEVRKRGVAQSEEEIEEIAKKIAVGAVRYNIVRIAPEKPMVFRWDEALDFEKVGCPVIQYAHARCSRILENVENISNENLFAYDMNENEKTIVKLLSKLPKIVEKAAEVRKPQIVANYVLDVAQGFNKFYANCPVLKEENETVKNSRLAIVSTTKTVLENTLDLLGIEMPGKM.

Residues 121–131 carry the 'HIGH' region motif; sequence ANPNGPFHIGH.

The protein belongs to the class-I aminoacyl-tRNA synthetase family.

Its subcellular location is the cytoplasm. It catalyses the reaction tRNA(Arg) + L-arginine + ATP = L-arginyl-tRNA(Arg) + AMP + diphosphate. This Methanococcus maripaludis (strain DSM 14266 / JCM 13030 / NBRC 101832 / S2 / LL) protein is Arginine--tRNA ligase.